Reading from the N-terminus, the 344-residue chain is Glycerol-3-phosphate dehydrogenase [NAD(P)+] (344 aa).

NADPH is bound by residues serine 11, tryptophan 12, histidine 32, arginine 33, and lysine 105. Positions 105, 135, and 137 each coordinate sn-glycerol 3-phosphate. Residue alanine 139 coordinates NADPH. Sn-glycerol 3-phosphate contacts are provided by lysine 190, aspartate 243, serine 253, arginine 254, and asparagine 255. Lysine 190 serves as the catalytic Proton acceptor. Arginine 254 provides a ligand contact to NADPH. The NADPH site is built by valine 278 and glutamate 280.

This sequence belongs to the NAD-dependent glycerol-3-phosphate dehydrogenase family.

The protein resides in the cytoplasm. The catalysed reaction is sn-glycerol 3-phosphate + NAD(+) = dihydroxyacetone phosphate + NADH + H(+). It catalyses the reaction sn-glycerol 3-phosphate + NADP(+) = dihydroxyacetone phosphate + NADPH + H(+). It functions in the pathway membrane lipid metabolism; glycerophospholipid metabolism. Catalyzes the reduction of the glycolytic intermediate dihydroxyacetone phosphate (DHAP) to sn-glycerol 3-phosphate (G3P), the key precursor for phospholipid synthesis. In Oceanobacillus iheyensis (strain DSM 14371 / CIP 107618 / JCM 11309 / KCTC 3954 / HTE831), this protein is Glycerol-3-phosphate dehydrogenase [NAD(P)+].